A 213-amino-acid chain; its full sequence is Thymidylate kinase (213 aa).

An ATP-binding site is contributed by 10 to 17 (GLEGAGKT).

The protein belongs to the thymidylate kinase family.

It catalyses the reaction dTMP + ATP = dTDP + ADP. Functionally, phosphorylation of dTMP to form dTDP in both de novo and salvage pathways of dTTP synthesis. This is Thymidylate kinase from Escherichia coli O7:K1 (strain IAI39 / ExPEC).